Here is an 83-residue protein sequence, read N- to C-terminus: Exodeoxyribonuclease 7 small subunit (83 aa).

It belongs to the XseB family. As to quaternary structure, heterooligomer composed of large and small subunits.

The protein resides in the cytoplasm. The catalysed reaction is Exonucleolytic cleavage in either 5'- to 3'- or 3'- to 5'-direction to yield nucleoside 5'-phosphates.. Bidirectionally degrades single-stranded DNA into large acid-insoluble oligonucleotides, which are then degraded further into small acid-soluble oligonucleotides. This Rhizobium meliloti (strain 1021) (Ensifer meliloti) protein is Exodeoxyribonuclease 7 small subunit.